Reading from the N-terminus, the 293-residue chain is 5'-3' exoribonuclease Rnm (293 aa).

The Mn(2+) site is built by histidine 17, histidine 19, aspartate 24, histidine 49, glutamate 76, histidine 87, histidine 202, aspartate 259, and histidine 261.

This sequence belongs to the PHP family. TrpH/YciV subfamily. It depends on Mn(2+) as a cofactor.

The enzyme catalyses a ribonucleoside 3',5'-bisphosphate + H2O = a ribonucleoside 5'-phosphate + phosphate. In terms of biological role, exoribonuclease that catalyzes the last steps of 5S, 16S and 23S rRNA 5'-end maturation. Removes 3 nucleotides (nt) from the 5' end of 5S, 16S and 23S rRNA precursors to generate the mature 5' ends. 5S and 23S rRNA maturation occurs more efficiently and accurately on ribosomal particles as compared to free RNA. Efficiently catalyzes the hydrolysis of the 3'-phosphate from 3',5'-bis-phosphonucleotides as well as the successive hydrolysis of 5'-phosphomononucleotides from the 5'-end of short pieces of RNA and DNA, with no specificity toward the identity of the nucleotide base. Is more efficient at hydrolyzing RNA oligonucleotides than DNA oligonucleotides. This enzyme can also hydrolyze annealed DNA duplexes, albeit at a catalytic efficiency lower than that of the corresponding single-stranded oligonucleotides. In Salmonella typhimurium (strain LT2 / SGSC1412 / ATCC 700720), this protein is 5'-3' exoribonuclease Rnm.